The sequence spans 1239 residues: DNA-directed RNA polymerase subunit beta (1239 aa).

A disordered region spans residues 1182-1239 (IEGAENQLEDKEEKEEEKEENYKEDSDEYDDLREEDVEPDLEELSLDDLDLDDFGDEH). Composition is skewed to acidic residues over residues 1191–1200 (DKEEKEEEKE) and 1206–1239 (DSDE…GDEH).

This sequence belongs to the RNA polymerase beta chain family. The RNAP catalytic core consists of 2 alpha, 1 beta, 1 beta' and 1 omega subunit. When a sigma factor is associated with the core the holoenzyme is formed, which can initiate transcription.

The enzyme catalyses RNA(n) + a ribonucleoside 5'-triphosphate = RNA(n+1) + diphosphate. In terms of biological role, DNA-dependent RNA polymerase catalyzes the transcription of DNA into RNA using the four ribonucleoside triphosphates as substrates. The polypeptide is DNA-directed RNA polymerase subunit beta (Clostridium botulinum (strain Loch Maree / Type A3)).